The primary structure comprises 209 residues: Orotate phosphoribosyltransferase (209 aa).

5-phospho-alpha-D-ribose 1-diphosphate contacts are provided by residues arginine 96, lysine 100, histidine 102, and 122-130 (EDLISTGGS). Serine 126 is an orotate binding site.

This sequence belongs to the purine/pyrimidine phosphoribosyltransferase family. PyrE subfamily. In terms of assembly, homodimer. It depends on Mg(2+) as a cofactor.

The enzyme catalyses orotidine 5'-phosphate + diphosphate = orotate + 5-phospho-alpha-D-ribose 1-diphosphate. It functions in the pathway pyrimidine metabolism; UMP biosynthesis via de novo pathway; UMP from orotate: step 1/2. Catalyzes the transfer of a ribosyl phosphate group from 5-phosphoribose 1-diphosphate to orotate, leading to the formation of orotidine monophosphate (OMP). In Streptococcus gordonii (strain Challis / ATCC 35105 / BCRC 15272 / CH1 / DL1 / V288), this protein is Orotate phosphoribosyltransferase.